Consider the following 416-residue polypeptide: Probable glucan 1,3-beta-glucosidase A (416 aa).

Residues 1 to 22 (MIFKFSQKALVALYLVVGLAEA) form the signal peptide. Glu211 acts as the Proton donor in catalysis. 2 cysteine pairs are disulfide-bonded: Cys291-Cys415 and Cys316-Cys342. Catalysis depends on Glu308, which acts as the Nucleophile. A glycan (N-linked (GlcNAc...) asparagine) is linked at Asn344.

It belongs to the glycosyl hydrolase 5 (cellulase A) family. In terms of assembly, monomer. Requires Mn(2+) as cofactor.

It localises to the secreted. The catalysed reaction is Successive hydrolysis of beta-D-glucose units from the non-reducing ends of (1-&gt;3)-beta-D-glucans, releasing alpha-glucose.. In terms of biological role, beta-glucanases participate in the metabolism of beta-glucan, the main structural component of the cell wall. It could also function biosynthetically as a transglycosylase. In Aspergillus fumigatus (strain ATCC MYA-4609 / CBS 101355 / FGSC A1100 / Af293) (Neosartorya fumigata), this protein is Probable glucan 1,3-beta-glucosidase A (exgA).